The primary structure comprises 528 residues: Ankyrin repeat and death domain-containing protein 1B (528 aa).

ANK repeat units follow at residues 67-96 (PNER…NINV), 100-129 (MNRT…RVDV), 133-162 (HGLT…DQRA), 166-197 (DGMS…DLNQ), 201-230 (KGRK…HTSE), 234-263 (GGNT…DINE), 267-296 (LNIS…DLHQ), 300-329 (PKES…DIDI), 333-362 (KQQT…DLKA), and 366-395 (QGKT…YYAW). Residues 427-515 (TLLWDLAYHQ…KLAEKTRHFK (89 aa)) form the Death domain.

This chain is Ankyrin repeat and death domain-containing protein 1B (ANKDD1B), found in Homo sapiens (Human).